The chain runs to 226 residues: ATP-dependent dethiobiotin synthetase BioD (226 aa).

12–17 (EVGKTV) is a binding site for ATP. Thr16 lines the Mg(2+) pocket. The active site involves Lys39. Residue Thr43 coordinates substrate. Residues Asp47, 108–111 (EALG), 168–169 (NC), and 200–202 (PYI) contribute to the ATP site. The Mg(2+) site is built by Asp47 and Glu108.

It belongs to the dethiobiotin synthetase family. In terms of assembly, homodimer. Requires Mg(2+) as cofactor.

It localises to the cytoplasm. It catalyses the reaction (7R,8S)-7,8-diammoniononanoate + CO2 + ATP = (4R,5S)-dethiobiotin + ADP + phosphate + 3 H(+). The enzyme catalyses (7R,8S)-8-amino-7-(carboxyamino)nonanoate + ATP = (4R,5S)-dethiobiotin + ADP + phosphate + H(+). It functions in the pathway cofactor biosynthesis; biotin biosynthesis; biotin from 7,8-diaminononanoate: step 1/2. Its function is as follows. Catalyzes a mechanistically unusual reaction, the ATP-dependent insertion of CO2 between the N7 and N8 nitrogen atoms of 7,8-diaminopelargonic acid (DAPA, also called 7,8-diammoniononanoate) to form a ureido ring. This cyanobacterium does not encode bioA (which catalyzes the formation of the precursor for this reaction in the cannonical pathway), instead it encodes bioU, which replaces bioA and also performs the first half of the cannonical BioD reaction. Thus in this organism BioD has a different substrate. The polypeptide is ATP-dependent dethiobiotin synthetase BioD (Gloeothece citriformis (strain PCC 7424) (Cyanothece sp. (strain PCC 7424))).